The primary structure comprises 130 residues: Methylglyoxal synthase (130 aa).

Residues 1 to 130 (MSKPRIALIA…DLARNMQDVC (130 aa)) form the MGS-like domain. Residues His-11, Lys-15, 37-40 (TGTT), and 57-58 (SG) each bind substrate. Catalysis depends on Asp-63, which acts as the Proton donor/acceptor. His-90 contacts substrate.

This sequence belongs to the methylglyoxal synthase family.

It catalyses the reaction dihydroxyacetone phosphate = methylglyoxal + phosphate. Catalyzes the formation of methylglyoxal from dihydroxyacetone phosphate. In Burkholderia orbicola (strain AU 1054), this protein is Methylglyoxal synthase.